The sequence spans 385 residues: tRNA-specific 2-thiouridylase MnmA (385 aa).

Residues 18 to 25 (AMSGGVDS) and leucine 44 each bind ATP. The Nucleophile role is filled by cysteine 112. Residues cysteine 112 and cysteine 209 are joined by a disulfide bond. Glycine 136 lines the ATP pocket. An interaction with tRNA region spans residues 159–161 (RDQ). Cysteine 209 functions as the Cysteine persulfide intermediate in the catalytic mechanism.

Belongs to the MnmA/TRMU family.

Its subcellular location is the cytoplasm. The enzyme catalyses S-sulfanyl-L-cysteinyl-[protein] + uridine(34) in tRNA + AH2 + ATP = 2-thiouridine(34) in tRNA + L-cysteinyl-[protein] + A + AMP + diphosphate + H(+). Functionally, catalyzes the 2-thiolation of uridine at the wobble position (U34) of tRNA, leading to the formation of s(2)U34. The sequence is that of tRNA-specific 2-thiouridylase MnmA from Methylorubrum extorquens (strain PA1) (Methylobacterium extorquens).